We begin with the raw amino-acid sequence, 120 residues long: NAD(P)H-quinone oxidoreductase subunit 3 (120 aa).

3 consecutive transmembrane segments (helical) span residues 6 to 26 (GYEYFLGFLLISGAVPILALT), 64 to 84 (MFALVFVIFDVETVFLYPWAV), and 89 to 109 (LGLLAFIEALVFITILVVALA).

Belongs to the complex I subunit 3 family. As to quaternary structure, NDH-1 can be composed of about 15 different subunits; different subcomplexes with different compositions have been identified which probably have different functions.

The protein localises to the cellular thylakoid membrane. It carries out the reaction a plastoquinone + NADH + (n+1) H(+)(in) = a plastoquinol + NAD(+) + n H(+)(out). The catalysed reaction is a plastoquinone + NADPH + (n+1) H(+)(in) = a plastoquinol + NADP(+) + n H(+)(out). Functionally, NDH-1 shuttles electrons from an unknown electron donor, via FMN and iron-sulfur (Fe-S) centers, to quinones in the respiratory and/or the photosynthetic chain. The immediate electron acceptor for the enzyme in this species is believed to be plastoquinone. Couples the redox reaction to proton translocation, and thus conserves the redox energy in a proton gradient. Cyanobacterial NDH-1 also plays a role in inorganic carbon-concentration. This chain is NAD(P)H-quinone oxidoreductase subunit 3, found in Prochlorococcus marinus (strain NATL1A).